A 325-amino-acid chain; its full sequence is Forkhead box protein B1 (325 aa).

The fork-head DNA-binding region spans 12 to 103 (QKPPYSYISL…GDMFENGSFL (92 aa)). Over residues 284 to 309 (LSNSPPSLSPTSSQTATSQSSPATPS) the composition is skewed to low complexity. The segment at 284–325 (LSNSPPSLSPTSSQTATSQSSPATPSETLTSPASALHSVAVH) is disordered.

As to expression, expressed widespread in the early developing ventricular zone of the neural tube and later restricted to areas of the spinal cord, hindbrain, thalamus and hypothalamus. Expressed in epithelial cells of developing and adult mammary glands.

The protein localises to the nucleus. Transcription factor expressed by neural progenitor cells in specific regions of the embryonic neuroepithelium. Essential for the mammillary nuclei maintenance. Negatively regulates the proliferation of oligodendrocyte progenitors and promotes oligodendrocyte maturation. Also expressed in mammary glands, plays a role in lactation, controls development of mammary glands and the inferior colliculi of the midbrain in the central nervous system that regulates the milk-ejection reflex. In Mus musculus (Mouse), this protein is Forkhead box protein B1 (Foxb1).